A 616-amino-acid chain; its full sequence is Chaperone protein HscA (616 aa).

This sequence belongs to the heat shock protein 70 family.

Its function is as follows. Chaperone involved in the maturation of iron-sulfur cluster-containing proteins. Has a low intrinsic ATPase activity which is markedly stimulated by HscB. Involved in the maturation of IscU. In Salmonella paratyphi B (strain ATCC BAA-1250 / SPB7), this protein is Chaperone protein HscA.